A 732-amino-acid polypeptide reads, in one-letter code: Catalase-peroxidase (732 aa).

The tract at residues 1–26 (MDAKTDDQGGKCPFPHGGGSRGHRNR) is disordered. The tryptophyl-tyrosyl-methioninium (Trp-Tyr) (with M-245) cross-link spans 97-219 (WHSAGTYRTT…LGAVQMGLIY (123 aa)). H98 (proton acceptor) is an active-site residue. The segment at residues 219–245 (YVNPEGPNGNPDPVAAAKDIRETFARM) is a cross-link (tryptophyl-tyrosyl-methioninium (Tyr-Met) (with W-97)). H260 contacts heme b.

It belongs to the peroxidase family. Peroxidase/catalase subfamily. Homodimer or homotetramer. The cofactor is heme b. In terms of processing, formation of the three residue Trp-Tyr-Met cross-link is important for the catalase, but not the peroxidase activity of the enzyme.

The enzyme catalyses H2O2 + AH2 = A + 2 H2O. It carries out the reaction 2 H2O2 = O2 + 2 H2O. Its function is as follows. Bifunctional enzyme with both catalase and broad-spectrum peroxidase activity. The polypeptide is Catalase-peroxidase (Rhodopseudomonas palustris (strain BisB5)).